The sequence spans 123 residues: Histone H2B (123 aa).

Residues 1–31 (MPPKVASKGAKKAASKAKAARSGEKKKKRRR) are disordered. Basic residues predominate over residues 9-31 (GAKKAASKAKAARSGEKKKKRRR). Serine 110 is a glycosylation site (O-linked (GlcNAc) serine). Lysine 118 participates in a covalent cross-link: Glycyl lysine isopeptide (Lys-Gly) (interchain with G-Cter in ubiquitin).

It belongs to the histone H2B family. The nucleosome is a histone octamer containing two molecules each of H2A, H2B, H3 and H4 assembled in one H3-H4 heterotetramer and two H2A-H2B heterodimers. The octamer wraps approximately 147 bp of DNA. In terms of processing, monoubiquitination of Lys-118 gives a specific tag for epigenetic transcriptional activation and is also prerequisite for histone H3 'Lys-4' and 'Lys-79' methylation. GlcNAcylation at Ser-110 promotes monoubiquitination of Lys-118. It fluctuates in response to extracellular glucose, and associates with transcribed genes.

It is found in the nucleus. The protein resides in the chromosome. Functionally, core component of nucleosome. Nucleosomes wrap and compact DNA into chromatin, limiting DNA accessibility to the cellular machineries which require DNA as a template. Histones thereby play a central role in transcription regulation, DNA repair, DNA replication and chromosomal stability. DNA accessibility is regulated via a complex set of post-translational modifications of histones, also called histone code, and nucleosome remodeling. The sequence is that of Histone H2B from Platynereis dumerilii (Dumeril's clam worm).